A 101-amino-acid polypeptide reads, in one-letter code: Small ribosomal subunit protein uS14 (101 aa).

It belongs to the universal ribosomal protein uS14 family. In terms of assembly, part of the 30S ribosomal subunit. Contacts proteins S3 and S10.

Its function is as follows. Binds 16S rRNA, required for the assembly of 30S particles and may also be responsible for determining the conformation of the 16S rRNA at the A site. The protein is Small ribosomal subunit protein uS14 of Pelagibacter ubique (strain HTCC1062).